Here is a 199-residue protein sequence, read N- to C-terminus: Nucleoid occlusion factor SlmA (199 aa).

The region spanning 11–71 (ERRQQVLTVL…ALIDNLEAHL (61 aa)) is the HTH tetR-type domain. The segment at residues 34–53 (TTARIAAEVGVSEAALYRYY) is a DNA-binding region (H-T-H motif).

It belongs to the nucleoid occlusion factor SlmA family. In terms of assembly, homodimer. Interacts with FtsZ.

The protein localises to the cytoplasm. It is found in the nucleoid. Functionally, required for nucleoid occlusion (NO) phenomenon, which prevents Z-ring formation and cell division over the nucleoid. Acts as a DNA-associated cell division inhibitor that binds simultaneously chromosomal DNA and FtsZ, and disrupts the assembly of FtsZ polymers. SlmA-DNA-binding sequences (SBS) are dispersed on non-Ter regions of the chromosome, preventing FtsZ polymerization at these regions. This is Nucleoid occlusion factor SlmA from Pasteurella multocida (strain Pm70).